Consider the following 426-residue polypeptide: Formyl-CoA:oxalate CoA-transferase (426 aa).

CoA-binding positions include Q17–S18, R38, L72–K75, N96–G98, R104, and K136–E139. D168 (nucleophile) is an active-site residue. Residue G247 to Q249 participates in substrate binding.

This sequence belongs to the CoA-transferase III family. Frc subfamily. In terms of assembly, homodimer.

It carries out the reaction formyl-CoA + oxalate = oxalyl-CoA + formate. The protein operates within metabolic intermediate degradation; oxalate degradation; CO(2) and formate from oxalate: step 1/2. Functionally, involved in the catabolism of oxalate and in the adapatation to low pH via the induction of the oxalate-dependent acid tolerance response (ATR). Catalyzes the transfer of the CoA moiety from formyl-CoA to oxalate. The chain is Formyl-CoA:oxalate CoA-transferase from Rhodopseudomonas palustris (strain BisB18).